The sequence spans 461 residues: MGLSTVPGLLLPLVLRALLVDVYPAGVHGLVLHPGDREKRESLCPQGKYSHPQNRSICCTKCHKGTYLHNDCLGPGLDTDCRECDNGTFTASENHLTQCLSCSKCRSEMSQVEISPCTVDRDTVCGCRKNQYRKYWSETLFQCLNCSLCPNGTVQLPCLEKQDTICNCHSGFFLRDKECVSCVNCKNADCKNLCPATSETRNDFQDTGTTVLLPLVIFFGLCLAFFLFVGLACRYQRWKPKLYSIICGKSTPVKEGEPEPLATAPSFGPITTFSPIPSFSPTTTFSPVPSFSPISSPTFTPCDWSNIKVTSPPKEIAPPPQGAGPILPMPPASTPVPTPLPKWGGSAHSAHSAPAQLADADPATLYAVVDGVPPTRWKEFVRRLGLSEHEIERLELQNGRCLREAQYSMLAEWRRRTSRREATLELLGSVLRDMDLLGCLEDIEEALRGPARLAPAPHLLR.

Residues 1–29 (MGLSTVPGLLLPLVLRALLVDVYPAGVHG) form the signal peptide. The Extracellular portion of the chain corresponds to 30-210 (LVLHPGDREK…RNDFQDTGTT (181 aa)). TNFR-Cys repeat units lie at residues 43–82 (LCPQGKYSHPQNRSICCTKCHKGTYLHNDCLGPGLDTDCR), 83–125 (ECDN…DTVC), 126–166 (GCRK…DTIC), and 167–195 (NCHSGFFLRDKECVSCVNCKNADCKNLCP). 7 disulfides stabilise this stretch: Cys-44–Cys-58, Cys-59–Cys-72, Cys-62–Cys-81, Cys-84–Cys-99, Cys-102–Cys-117, Cys-105–Cys-125, and Cys-127–Cys-143. Asn-54 carries an N-linked (GlcNAc...) asparagine glycan. N-linked (GlcNAc...) asparagine glycosylation occurs at Asn-86. Asn-145 and Asn-151 each carry an N-linked (GlcNAc...) asparagine glycan. Cystine bridges form between Cys-146-Cys-158, Cys-149-Cys-166, Cys-168-Cys-179, Cys-182-Cys-194, and Cys-185-Cys-190. The chain crosses the membrane as a helical span at residues 211 to 233 (VLLPLVIFFGLCLAFFLFVGLAC). The Cytoplasmic portion of the chain corresponds to 234–461 (RYQRWKPKLY…RLAPAPHLLR (228 aa)). Residues 340 to 350 (LPKWGGSAHSA) are N-SMase activation domain (NSD). The region spanning 362 to 447 (PATLYAVVDG…GCLEDIEEAL (86 aa)) is the Death domain.

Binding of TNF to the extracellular domain leads to homotrimerization. The aggregated death domains provide a novel molecular interface that interacts specifically with the death domain of TRADD. Various TRADD-interacting proteins such as TRAFS, RIPK1 and possibly FADD, are recruited to the complex by their association with TRADD. This complex activates at least two distinct signaling cascades, apoptosis and NF-kappa-B signaling. Interacts with BAG4, BABAM2, FEM1B, GRB2, SQSTM1 and TRPC4AP. Interacts with DAB2IP. Interacts directly with NOL3 (via CARD domain); inhibits TNF-signaling pathway. Interacts with SH3RF2, TRADD and RIPK1. SH3RF2 facilitates the recruitment of RIPK1 and TRADD to TNFRSF1A in a TNF-alpha-dependent process. Interacts with PGLYRP1; this interaction is important for cell death induction. Interacts (via death domain) with MADD (via death domain).

Its subcellular location is the cell membrane. The protein localises to the golgi apparatus membrane. Functionally, receptor for TNFSF2/TNF-alpha and homotrimeric TNFSF1/lymphotoxin-alpha. The adapter molecule FADD recruits caspase-8 to the activated receptor. The resulting death-inducing signaling complex (DISC) performs caspase-8 proteolytic activation which initiates the subsequent cascade of caspases (aspartate-specific cysteine proteases) mediating apoptosis. The chain is Tumor necrosis factor receptor superfamily member 1A (TNFRSF1A) from Sus scrofa (Pig).